The primary structure comprises 270 residues: ATP synthase subunit a (270 aa).

A run of 6 helical transmembrane segments spans residues 27 to 47, 90 to 110, 147 to 166, 182 to 202, 211 to 231, and 238 to 258; these read FWTF…VFIL, IAPL…MDLI, VNMT…FYSV, PFNT…SLIA, LFGN…TLGV, and FLWA…FMML.

Belongs to the ATPase A chain family. F-type ATPases have 2 components, CF(1) - the catalytic core - and CF(0) - the membrane proton channel. CF(1) has five subunits: alpha(3), beta(3), gamma(1), delta(1), epsilon(1). CF(0) has three main subunits: a(1), b(2) and c(9-12). The alpha and beta chains form an alternating ring which encloses part of the gamma chain. CF(1) is attached to CF(0) by a central stalk formed by the gamma and epsilon chains, while a peripheral stalk is formed by the delta and b chains.

The protein resides in the cell inner membrane. In terms of biological role, key component of the proton channel; it plays a direct role in the translocation of protons across the membrane. The sequence is that of ATP synthase subunit a from Pseudoalteromonas atlantica (strain T6c / ATCC BAA-1087).